Here is a 95-residue protein sequence, read N- to C-terminus: Pyrimidine/purine nucleoside phosphorylase (95 aa).

Belongs to the nucleoside phosphorylase PpnP family.

It catalyses the reaction a purine D-ribonucleoside + phosphate = a purine nucleobase + alpha-D-ribose 1-phosphate. The enzyme catalyses adenosine + phosphate = alpha-D-ribose 1-phosphate + adenine. The catalysed reaction is cytidine + phosphate = cytosine + alpha-D-ribose 1-phosphate. It carries out the reaction guanosine + phosphate = alpha-D-ribose 1-phosphate + guanine. It catalyses the reaction inosine + phosphate = alpha-D-ribose 1-phosphate + hypoxanthine. The enzyme catalyses thymidine + phosphate = 2-deoxy-alpha-D-ribose 1-phosphate + thymine. The catalysed reaction is uridine + phosphate = alpha-D-ribose 1-phosphate + uracil. It carries out the reaction xanthosine + phosphate = alpha-D-ribose 1-phosphate + xanthine. Functionally, catalyzes the phosphorolysis of diverse nucleosides, yielding D-ribose 1-phosphate and the respective free bases. Can use uridine, adenosine, guanosine, cytidine, thymidine, inosine and xanthosine as substrates. Also catalyzes the reverse reactions. The polypeptide is Pyrimidine/purine nucleoside phosphorylase (Edwardsiella ictaluri (strain 93-146)).